A 343-amino-acid polypeptide reads, in one-letter code: Ribosomal RNA-processing protein 8 (343 aa).

The segment at 1-123 is disordered; sequence MGKKRKITDE…NDDVAAAPEE (123 aa). Positions 7 to 33 are enriched in basic and acidic residues; sequence ITDEKDAQHVPAEKREKVENWLKKSTE. Basic residues-rich tracts occupy residues 45 to 59 and 89 to 101; these read KKKRPWRNKVRKLAA and KKKRKRGPKKKKF. Residues 112-123 are compositionally biased toward acidic residues; sequence TENDDVAAAPEE. S-adenosyl-L-methionine-binding residues include histidine 169, glycine 204, aspartate 224, aspartate 236, methionine 237, and cysteine 253.

This sequence belongs to the methyltransferase superfamily. RRP8 family.

The protein resides in the nucleus. The protein localises to the nucleolus. Functionally, probable methyltransferase required to silence rDNA. Involved in regulation of antisense ribosomal siRNA production. Required for the N1-methyladenosine modification of 26S rRNAs. This chain is Ribosomal RNA-processing protein 8 (rrp-8), found in Caenorhabditis elegans.